The following is a 314-amino-acid chain: tRNA(Ile)-lysidine synthase (314 aa).

Position 37-42 (37-42 (SGGPDS)) interacts with ATP.

The protein belongs to the tRNA(Ile)-lysidine synthase family.

The protein localises to the cytoplasm. The enzyme catalyses cytidine(34) in tRNA(Ile2) + L-lysine + ATP = lysidine(34) in tRNA(Ile2) + AMP + diphosphate + H(+). Functionally, ligates lysine onto the cytidine present at position 34 of the AUA codon-specific tRNA(Ile) that contains the anticodon CAU, in an ATP-dependent manner. Cytidine is converted to lysidine, thus changing the amino acid specificity of the tRNA from methionine to isoleucine. This chain is tRNA(Ile)-lysidine synthase, found in Corynebacterium glutamicum (strain ATCC 13032 / DSM 20300 / JCM 1318 / BCRC 11384 / CCUG 27702 / LMG 3730 / NBRC 12168 / NCIMB 10025 / NRRL B-2784 / 534).